A 2506-amino-acid chain; its full sequence is Zinc finger protein 462 (2506 aa).

C2H2-type zinc fingers lie at residues 4 to 27 (LQCD…QDVH), 108 to 131 (FQCK…RKVH), and 162 to 185 (FSCQ…KMYH). A Glycyl lysine isopeptide (Lys-Gly) (interchain with G-Cter in SUMO1); alternate cross-link involves residue lysine 20. Lysine 20 participates in a covalent cross-link: Glycyl lysine isopeptide (Lys-Gly) (interchain with G-Cter in SUMO2); alternate. The tract at residues 215 to 241 (PCKELPAEVVERSILESMVKPLTKSRG) is interaction with PBX1. Residues lysine 234 and lysine 271 each participate in a glycyl lysine isopeptide (Lys-Gly) (interchain with G-Cter in SUMO2) cross-link. The disordered stretch occupies residues 280–299 (QEGTNLPDVPNKSAPSPTSN). O-linked (GlcNAc6P) serine glycans are attached at residues serine 292 and serine 309. Residues lysine 337, lysine 347, and lysine 349 each participate in a glycyl lysine isopeptide (Lys-Gly) (interchain with G-Cter in SUMO2) cross-link. Residues 337-356 (KFSPMSYPQMKPKSPHNSGL) form a disordered region. 2 positions are modified to phosphoserine: serine 350 and serine 354. A Glycyl lysine isopeptide (Lys-Gly) (interchain with G-Cter in SUMO2) cross-link involves residue lysine 428. 2 consecutive C2H2-type zinc fingers follow at residues 439–462 (FQCP…ENIH) and 470–492 (YKCD…KQCH). A Glycyl lysine isopeptide (Lys-Gly) (interchain with G-Cter in SUMO2) cross-link involves residue lysine 484. Positions 535 to 596 (DPLQQQQPPQ…QPQPPTQAAP (62 aa)) are disordered. Pro residues predominate over residues 542-593 (PPQPPPPPPPPPPSQPQPLQQPQPPQLQPPHQVPPQPQTQPPPTQQPQPPTQ). The segment at 600 to 623 (YKCTMCNYSTTTLKGLRVHQQHKH) adopts a C2H2-type 6 zinc-finger fold. Residues lysine 631, lysine 657, and lysine 668 each participate in a glycyl lysine isopeptide (Lys-Gly) (interchain with G-Cter in SUMO2) cross-link. The disordered stretch occupies residues 636–661 (PSSLPLENETDSHPSSSNTVKKSQTS). Residues 648–661 (HPSSSNTVKKSQTS) are compositionally biased toward polar residues. The residue at position 688 (serine 688) is a Phosphoserine. Glycyl lysine isopeptide (Lys-Gly) (interchain with G-Cter in SUMO2) cross-links involve residues lysine 706 and aspartate 849. 3 consecutive C2H2-type zinc fingers follow at residues 843-866 (YYCK…QRMH), 886-908 (YRCL…YGEH), and 925-948 (YRCR…QRMH). Residue lysine 986 forms a Glycyl lysine isopeptide (Lys-Gly) (interchain with G-Cter in SUMO2) linkage. The C2H2-type 10 zinc finger occupies 1030-1053 (YDCDVCSFASPNMHSVLVHYQKKH). The residue at position 1090 (serine 1090) is a Phosphoserine. Lysine 1135 is covalently cross-linked (Glycyl lysine isopeptide (Lys-Gly) (interchain with G-Cter in SUMO2)). The disordered stretch occupies residues 1157–1186 (MRGVEGPQGSPRPPAPIQQLNRSSSERDGP). Serine 1166 carries the post-translational modification Phosphoserine. Glycyl lysine isopeptide (Lys-Gly) (interchain with G-Cter in SUMO2) cross-links involve residues lysine 1206, lysine 1214, lysine 1220, and lysine 1243. 2 C2H2-type zinc fingers span residues 1265–1288 (LKCR…KKDH) and 1470–1493 (YQCT…GKKH). Lysine 1499 participates in a covalent cross-link: Glycyl lysine isopeptide (Lys-Gly) (interchain with G-Cter in SUMO2). A C2H2-type 13 zinc finger spans residues 1515–1538 (YKCRHCPYINTRIHGVLTHYQKRH). Glycyl lysine isopeptide (Lys-Gly) (interchain with G-Cter in SUMO2) cross-links involve residues lysine 1571 and lysine 1591. 3 consecutive C2H2-type zinc fingers follow at residues 1577 to 1600 (YRCK…EKYH), 1660 to 1683 (FRCQ…RIKH), and 1697 to 1720 (FKCA…QKRH). Residues lysine 1698 and lysine 1780 each participate in a glycyl lysine isopeptide (Lys-Gly) (interchain with G-Cter in SUMO2) cross-link. The segment at 1892 to 1914 (YQCKHCDSKLQSTAELTSHLNIH) adopts a C2H2-type 17 zinc-finger fold. Lysine 1946 is covalently cross-linked (Glycyl lysine isopeptide (Lys-Gly) (interchain with G-Cter in SUMO2)). A C2H2-type 18; degenerate zinc finger spans residues 1968 to 1992 (YKCKFCVEVHPTLRAICNHLRKHVQ). Lysine 2004 carries the N6-methyllysine modification. C2H2-type zinc fingers lie at residues 2025-2048 (YSCQ…QTHH), 2054-2077 (FRCK…LKAH), and 2083-2106 (YKCS…LKVH). Lysine 2104 participates in a covalent cross-link: Glycyl lysine isopeptide (Lys-Gly) (interchain with G-Cter in SUMO2). The segment at 2122 to 2152 (SSHSHHSSQKATPAEEVEDSNDSSYSEPPDV) is disordered. Residues 2143–2152 (DSSYSEPPDV) show a composition bias toward polar residues. Residues serine 2172 and serine 2177 each carry the phosphoserine modification. 3 C2H2-type zinc fingers span residues 2191 to 2214 (LHCE…RDKH), 2220 to 2243 (FKCK…EAGH), and 2254 to 2276 (LRCP…IVLH). Lysine 2293 participates in a covalent cross-link: Glycyl lysine isopeptide (Lys-Gly) (interchain with G-Cter in SUMO2). 2 consecutive C2H2-type zinc fingers follow at residues 2300 to 2322 (FRCD…IEKH) and 2328 to 2351 (YKCQ…RDEH). The interval 2371-2396 (MKEKMESSSSDDEDKEEEMNSKAEDR) is disordered. The segment at 2414 to 2436 (FPCEFCGRAFSQGSEWERHVLRH) adopts a C2H2-type 27 zinc-finger fold. Glycyl lysine isopeptide (Lys-Gly) (interchain with G-Cter in SUMO2) cross-links involve residues lysine 2444 and lysine 2504.

Interacts with PBX1; this interaction prevents PBX1-HOXA9 heterodimer from forming and binding to DNA. O-GlcNAcylated with O-GlcNAc-6-phosphate.

It localises to the nucleus. In terms of biological role, zinc finger nuclear factor involved in transcription by regulating chromatin structure and organization. Involved in the pluripotency and differentiation of embryonic stem cells by regulating SOX2, POU5F1/OCT4, and NANOG. By binding PBX1, prevents the heterodimerization of PBX1 and HOXA9 and their binding to DNA. Regulates neuronal development and neural cell differentiation. This is Zinc finger protein 462 from Homo sapiens (Human).